A 445-amino-acid polypeptide reads, in one-letter code: Phosphoglucosamine mutase (445 aa).

The Phosphoserine intermediate role is filled by Ser102. The Mg(2+) site is built by Ser102, Asp241, Asp243, and Asp245. Ser102 is subject to Phosphoserine.

This sequence belongs to the phosphohexose mutase family. Mg(2+) serves as cofactor. Activated by phosphorylation.

The enzyme catalyses alpha-D-glucosamine 1-phosphate = D-glucosamine 6-phosphate. Its function is as follows. Catalyzes the conversion of glucosamine-6-phosphate to glucosamine-1-phosphate. This chain is Phosphoglucosamine mutase, found in Proteus mirabilis (strain HI4320).